The chain runs to 480 residues: Reticulophagy regulator 1 (480 aa).

Residues 1–10 show a composition bias toward basic and acidic residues; the sequence is MASPAPEEHA. Residues 1–41 are disordered; sequence MASPAPEEHATQGCPATEEQEPRPGVPGEEAGPEGAGPQVE. The Cytoplasmic segment spans residues 1 to 43; sequence MASPAPEEHATQGCPATEEQEPRPGVPGEEAGPEGAGPQVEEA. Residues 44 to 64 traverse the membrane as a helical segment; the sequence is AGRVAAALTWLLGEPVLWLGW. Residues 65 to 78 lie on the Lumenal side of the membrane; the sequence is RADELLSWKRPLRS. Residues 67 to 216 form a reticulon homology domain region; that stretch reads DELLSWKRPL…LLFAFLCPLF (150 aa). The helical transmembrane segment at 79–99 threads the bilayer; that stretch reads LLAFLGANLLFWFLALTPWRV. Residues 100–101 lie on the Cytoplasmic side of the membrane; sequence YH. Residues 102 to 122 form a helical membrane-spanning segment; sequence LISVMILGRVIMQIIKDMVLS. Over 123-191 the chain is Lumenal; sequence RARGAQLWRS…LVCSVCTFFT (69 aa). At S132 the chain carries Phosphoserine. S134 is modified (phosphoserine; by CAMK2B). Phosphoserine is present on S136. Residues 192 to 212 traverse the membrane as a helical segment; sequence ILGSYIPGVILSYLLLLFAFL. The Cytoplasmic segment spans residues 213–480; that stretch reads CPLFKCNDIG…GFLSNLLGGH (268 aa). Residues 302 to 313 are compositionally biased toward polar residues; that stretch reads FNLSEGYTPQTD. The tract at residues 302-348 is disordered; it reads FNLSEGYTPQTDTSDDLDRPSEEVFSRDLSDFPSLENGAGTNDEDEL. Positions 317–331 are enriched in basic and acidic residues; sequence DLDRPSEEVFSRDLS. An LIR motif motif is present at residues 436–441; sequence DDFELL. The tract at residues 450-480 is disordered; the sequence is ESELGLTQDQGAEAQQSKKSSGFLSNLLGGH. Over residues 454–473 the composition is skewed to polar residues; that stretch reads GLTQDQGAEAQQSKKSSGFL.

The protein belongs to the RETREG family. In terms of assembly, homooligomer; oligomerization is enhanced following endoplasmic reticulum stress and is mediated by the reticulon homology domain. Interacts with ATG8 family modifier proteins MAP1LC3A, MAP1LC3B, GABARAP, GABARAPL1 and GABARAPL2. Post-translationally, phosphorylation at Ser-134 by CAMK2B enhances oligomerization and membrane scission and reticulophagy activity.

The protein localises to the golgi apparatus. It localises to the cis-Golgi network membrane. The protein resides in the endoplasmic reticulum membrane. Its function is as follows. Endoplasmic reticulum (ER)-anchored autophagy regulator which mediates ER delivery into lysosomes through sequestration into autophagosomes. Promotes membrane remodeling and ER scission via its membrane bending capacity and targets the fragments into autophagosomes via interaction with ATG8 family proteins. Active under basal conditions. Required for collagen quality control in a LIR motif-dependent manner. Required for long-term survival of nociceptive and autonomic ganglion neurons. This is Reticulophagy regulator 1 from Rattus norvegicus (Rat).